The chain runs to 422 residues: UDP-N-acetylmuramoylalanine--D-glutamate ligase (422 aa).

102-108 (GTNGKTT) contributes to the ATP binding site.

Belongs to the MurCDEF family.

It is found in the cytoplasm. The enzyme catalyses UDP-N-acetyl-alpha-D-muramoyl-L-alanine + D-glutamate + ATP = UDP-N-acetyl-alpha-D-muramoyl-L-alanyl-D-glutamate + ADP + phosphate + H(+). The protein operates within cell wall biogenesis; peptidoglycan biosynthesis. Functionally, cell wall formation. Catalyzes the addition of glutamate to the nucleotide precursor UDP-N-acetylmuramoyl-L-alanine (UMA). This is UDP-N-acetylmuramoylalanine--D-glutamate ligase from Helicobacter pylori (strain HPAG1).